Consider the following 179-residue polypeptide: Large ribosomal subunit protein uL5 (179 aa).

Belongs to the universal ribosomal protein uL5 family. As to quaternary structure, part of the 50S ribosomal subunit; part of the 5S rRNA/L5/L18/L25 subcomplex. Contacts the 5S rRNA and the P site tRNA. Forms a bridge to the 30S subunit in the 70S ribosome.

Functionally, this is one of the proteins that bind and probably mediate the attachment of the 5S RNA into the large ribosomal subunit, where it forms part of the central protuberance. In the 70S ribosome it contacts protein S13 of the 30S subunit (bridge B1b), connecting the 2 subunits; this bridge is implicated in subunit movement. Contacts the P site tRNA; the 5S rRNA and some of its associated proteins might help stabilize positioning of ribosome-bound tRNAs. The polypeptide is Large ribosomal subunit protein uL5 (Francisella philomiragia subsp. philomiragia (strain ATCC 25017 / CCUG 19701 / FSC 153 / O#319-036)).